The following is a 283-amino-acid chain: Formamidopyrimidine-DNA glycosylase (283 aa).

P2 serves as the catalytic Schiff-base intermediate with DNA. E3 functions as the Proton donor in the catalytic mechanism. The active-site Proton donor; for beta-elimination activity is K58. Residues H100, R119, and R162 each contribute to the DNA site. The segment at 247–283 (RVYGREGLPCVTPGCSGTVGRIVQSGRSSFHCPLCQR) adopts an FPG-type zinc-finger fold. R273 serves as the catalytic Proton donor; for delta-elimination activity.

The protein belongs to the FPG family. Monomer. The cofactor is Zn(2+).

It carries out the reaction Hydrolysis of DNA containing ring-opened 7-methylguanine residues, releasing 2,6-diamino-4-hydroxy-5-(N-methyl)formamidopyrimidine.. The catalysed reaction is 2'-deoxyribonucleotide-(2'-deoxyribose 5'-phosphate)-2'-deoxyribonucleotide-DNA = a 3'-end 2'-deoxyribonucleotide-(2,3-dehydro-2,3-deoxyribose 5'-phosphate)-DNA + a 5'-end 5'-phospho-2'-deoxyribonucleoside-DNA + H(+). In terms of biological role, involved in base excision repair of DNA damaged by oxidation or by mutagenic agents. Acts as a DNA glycosylase that recognizes and removes damaged bases. Has a preference for oxidized purines, such as 7,8-dihydro-8-oxoguanine (8-oxoG). Has AP (apurinic/apyrimidinic) lyase activity and introduces nicks in the DNA strand. Cleaves the DNA backbone by beta-delta elimination to generate a single-strand break at the site of the removed base with both 3'- and 5'-phosphates. The chain is Formamidopyrimidine-DNA glycosylase from Cereibacter sphaeroides (strain ATCC 17029 / ATH 2.4.9) (Rhodobacter sphaeroides).